The chain runs to 243 residues: PF03932 family protein CutC (243 aa).

It belongs to the CutC family.

The protein localises to the cytoplasm. The polypeptide is PF03932 family protein CutC (Glaesserella parasuis serovar 5 (strain SH0165) (Haemophilus parasuis)).